Reading from the N-terminus, the 94-residue chain is Beta-defensin 132 (94 aa).

The N-terminal stretch at 1 to 22 is a signal peptide; the sequence is MKFLLLVLAALGFLTQVIPASA. 2 disulfide bridges follow: cysteine 27/cysteine 55 and cysteine 39/cysteine 56. The tract at residues 72 to 94 is disordered; it reads GNHWQSRRNTQRKDKKQQTTVTS. A compositionally biased stretch (basic residues) spans 76-86; it reads QSRRNTQRKDK.

Belongs to the beta-defensin family.

It localises to the secreted. Has antibacterial activity. The sequence is that of Beta-defensin 132 (DEFB132) from Gorilla gorilla gorilla (Western lowland gorilla).